Reading from the N-terminus, the 71-residue chain is Equinin B (71 aa).

The N-terminal stretch at 1-11 (MAVIMVDQAEG) is a signal peptide. The propeptide occupies 46–71 (GDEPQQMALDDESDPLVILPNNYNDY).

Post-translationally, contains 4 disulfide bonds.

It localises to the secreted. Its subcellular location is the target cell membrane. Its function is as follows. Antimicrobial peptide with inhibitory activity against both Gram-positive and Gram-negative bacteria (E.coli (MIC=0.25 ug/ml), M.lysodeikticus (MIC=0.25 ug/ml), and V.alginolyticus (MIC=0.25 ug/ml)). Does not show hemolytic activity. The chain is Equinin B from Actinia equina (Beadlet anemone).